A 173-amino-acid polypeptide reads, in one-letter code: Putative metal-dependent hydrolase BCE_2729 (173 aa).

3 residues coordinate Zn(2+): H65, H156, and H160.

This sequence belongs to the metal hydrolase YfiT family. As to quaternary structure, homodimer. The cofactor is Zn(2+).

It localises to the cytoplasm. In terms of biological role, possible metal-dependent hydrolase. This is Putative metal-dependent hydrolase BCE_2729 from Bacillus cereus (strain ATCC 10987 / NRS 248).